A 380-amino-acid polypeptide reads, in one-letter code: 2-aminoethylphosphonate--pyruvate transaminase (380 aa).

Lys204 carries the post-translational modification N6-(pyridoxal phosphate)lysine.

The protein belongs to the class-V pyridoxal-phosphate-dependent aminotransferase family. PhnW subfamily. In terms of assembly, homodimer. Pyridoxal 5'-phosphate serves as cofactor.

The enzyme catalyses (2-aminoethyl)phosphonate + pyruvate = phosphonoacetaldehyde + L-alanine. Its function is as follows. Involved in phosphonate degradation. The protein is 2-aminoethylphosphonate--pyruvate transaminase of Aeromonas hydrophila subsp. hydrophila (strain ATCC 7966 / DSM 30187 / BCRC 13018 / CCUG 14551 / JCM 1027 / KCTC 2358 / NCIMB 9240 / NCTC 8049).